Here is a 136-residue protein sequence, read N- to C-terminus: Protein K5 (136 aa).

Belongs to the poxviridae K5 protein family.

The sequence is that of Protein K5 from Homo sapiens (Human).